The following is a 323-amino-acid chain: tRNA U34 carboxymethyltransferase (323 aa).

Carboxy-S-adenosyl-L-methionine contacts are provided by residues Lys-91, Trp-105, Lys-110, Gly-130, 181–182 (IE), Met-196, Tyr-200, and Arg-315.

It belongs to the class I-like SAM-binding methyltransferase superfamily. CmoB family. In terms of assembly, homotetramer.

The catalysed reaction is carboxy-S-adenosyl-L-methionine + 5-hydroxyuridine(34) in tRNA = 5-carboxymethoxyuridine(34) in tRNA + S-adenosyl-L-homocysteine + H(+). Catalyzes carboxymethyl transfer from carboxy-S-adenosyl-L-methionine (Cx-SAM) to 5-hydroxyuridine (ho5U) to form 5-carboxymethoxyuridine (cmo5U) at position 34 in tRNAs. This is tRNA U34 carboxymethyltransferase from Yersinia pseudotuberculosis serotype IB (strain PB1/+).